A 473-amino-acid chain; its full sequence is Membrane protein TMS1 (473 aa).

The Cytoplasmic segment spans residues 1–6; it reads MGAVIS. Residues 7–29 form a helical membrane-spanning segment; the sequence is LPVSMAGSFVASCFGGCCSNLVT. Residues 30–38 are Vacuolar-facing; it reads KTASSLGSS. The helical transmembrane segment at 39–61 threads the bilayer; sequence SLGTRLLYAVWLLLNSLISWVSY. Residues 62–81 are Cytoplasmic-facing; the sequence is SANKSILWPGKTCTGTGECG. The chain crosses the membrane as a helical span at residues 82-104; that stretch reads FFTVHRLNFALGCLHLILALVLT. At 105 to 118 the chain is on the vacuolar side; the sequence is GVKSTNDVRAALQN. Residues 119 to 138 traverse the membrane as a helical segment; sequence SWWSLKFILYLCLIVLSFVI. Topologically, residues 139-144 are cytoplasmic; it reads PNDFYI. The helical transmembrane segment at 145-167 threads the bilayer; the sequence is FFSKWVSVPSGAIFILVGLILLV. Residues 168 to 194 lie on the Vacuolar side of the membrane; it reads DFAHEWAETCISHVESEDEDSSFWQRF. A helical membrane pass occupies residues 195-217; that stretch reads LVLGTTSMYTASIIMTVVMYVMF. Topologically, residues 218-228 are cytoplasmic; the sequence is CHQQCNMNQTA. Residues 229-246 traverse the membrane as a helical segment; the sequence is VTVNLILTVITLVLSVNP. Residues 247 to 295 lie on the Vacuolar side of the membrane; sequence KIQEANPKSGLAQSSMVSVYCTYLTMSAMSSEPDDKMCNPLVRSSGTRK. Residues 296-318 form a helical membrane-spanning segment; that stretch reads FSIILGSLFTFIAIAYTTTRAAA. Over 319–398 the chain is Cytoplasmic; it reads NSAFQGTNTN…DDERTGTKYN (80 aa). A helical membrane pass occupies residues 399–421; it reads YTLFHVIFFLATQWIAILLTINV. Residues 422-435 are Vacuolar-facing; sequence TQDDVGDFIPVGRT. Residues 436-458 traverse the membrane as a helical segment; it reads YFYSWVKIVSAWICYALYGWTVV. The Cytoplasmic portion of the chain corresponds to 459–473; the sequence is APAIMPDRFDYENYY.

The protein belongs to the TDE1 family.

The protein localises to the membrane. The polypeptide is Membrane protein TMS1 (TMS1) (Saccharomyces cerevisiae (strain ATCC 204508 / S288c) (Baker's yeast)).